Here is a 161-residue protein sequence, read N- to C-terminus: Transcription elongation factor GreA (161 aa).

A coiled-coil region spans residues 8–28; it reads LTQEGFKQLEKELENLIQVKR.

The protein belongs to the GreA/GreB family.

Functionally, necessary for efficient RNA polymerase transcription elongation past template-encoded arresting sites. The arresting sites in DNA have the property of trapping a certain fraction of elongating RNA polymerases that pass through, resulting in locked ternary complexes. Cleavage of the nascent transcript by cleavage factors such as GreA or GreB allows the resumption of elongation from the new 3'terminus. GreA releases sequences of 2 to 3 nucleotides. The polypeptide is Transcription elongation factor GreA (Mycoplasma genitalium (strain ATCC 33530 / DSM 19775 / NCTC 10195 / G37) (Mycoplasmoides genitalium)).